The sequence spans 228 residues: Immunogenic protein MPB64 (228 aa).

The signal sequence occupies residues 1–23 (MRIKIFMLVTAVVLLCCSGVATA).

Belongs to the RsiV family.

It is found in the secreted. The protein is Immunogenic protein MPB64 (mpb64) of Mycobacterium bovis (strain ATCC BAA-935 / AF2122/97).